The primary structure comprises 111 residues: Cytochrome c-550 (111 aa).

Heme c contacts are provided by Cys13, Cys16, His17, and Met90.

Post-translationally, binds 1 heme c group covalently per subunit.

This chain is Cytochrome c-550, found in Novispirillum itersonii (Aquaspirillum itersonii).